Reading from the N-terminus, the 267-residue chain is Mediator of RNA polymerase II transcription subunit 18 (267 aa).

It belongs to the Mediator complex subunit 18 family. In terms of assembly, component of the Mediator complex.

Its subcellular location is the nucleus. Its function is as follows. Component of the Mediator complex, a coactivator involved in the regulated transcription of nearly all RNA polymerase II-dependent genes. Mediator functions as a bridge to convey information from gene-specific regulatory proteins to the basal RNA polymerase II transcription machinery. Mediator is recruited to promoters by direct interactions with regulatory proteins and serves as a scaffold for the assembly of a functional preinitiation complex with RNA polymerase II and the general transcription factors. This is Mediator of RNA polymerase II transcription subunit 18 (SRB5) from Coccidioides immitis (strain RS) (Valley fever fungus).